Consider the following 128-residue polypeptide: Sirohydrochlorin cobaltochelatase (128 aa).

H9 functions as the Proton acceptor in the catalytic mechanism. Residue H9 coordinates Co(2+). Substrate-binding positions include K43 and 68–73 (FATGTH). H73 is a binding site for Co(2+).

Belongs to the CbiX family. CbiXS subfamily. Homotetramer; dimer of dimers.

It carries out the reaction Co-sirohydrochlorin + 2 H(+) = sirohydrochlorin + Co(2+). It participates in cofactor biosynthesis; adenosylcobalamin biosynthesis; cob(II)yrinate a,c-diamide from sirohydrochlorin (anaerobic route): step 1/10. Its function is as follows. Catalyzes the insertion of Co(2+) into sirohydrochlorin as part of the anaerobic pathway to cobalamin biosynthesis. The sequence is that of Sirohydrochlorin cobaltochelatase from Saccharolobus solfataricus (strain ATCC 35092 / DSM 1617 / JCM 11322 / P2) (Sulfolobus solfataricus).